A 220-amino-acid chain; its full sequence is Transcriptional regulatory protein LnrK (220 aa).

Residues K3–H119 form the Response regulatory domain. D54 carries the post-translational modification 4-aspartylphosphate. Positions K151 to G216 constitute an HTH luxR-type domain. A DNA-binding region (H-T-H motif) is located at residues N175 to S194.

Post-translationally, phosphorylated by LnrJ.

Its subcellular location is the cytoplasm. Required for resistance to linearmycins, a family of antibiotic-specialized metabolites produced by some streptomycetes. Member of the two-component regulatory system LnrJ/LnrK, which induces expression of the LnrLMN ABC transporter in response to linearmycins and other polyenes. Probably binds to the promoter region of the lnrLMN operon and directly regulates its expression. May also promote biofilm formation. This chain is Transcriptional regulatory protein LnrK, found in Bacillus subtilis (strain 168).